An 885-amino-acid polypeptide reads, in one-letter code: Alanine--tRNA ligase (885 aa).

The Zn(2+) site is built by histidine 571, histidine 575, cysteine 674, and histidine 678.

The protein belongs to the class-II aminoacyl-tRNA synthetase family. Zn(2+) is required as a cofactor.

It localises to the cytoplasm. It catalyses the reaction tRNA(Ala) + L-alanine + ATP = L-alanyl-tRNA(Ala) + AMP + diphosphate. Functionally, catalyzes the attachment of alanine to tRNA(Ala) in a two-step reaction: alanine is first activated by ATP to form Ala-AMP and then transferred to the acceptor end of tRNA(Ala). Also edits incorrectly charged Ser-tRNA(Ala) and Gly-tRNA(Ala) via its editing domain. This chain is Alanine--tRNA ligase, found in Clavibacter michiganensis subsp. michiganensis (strain NCPPB 382).